Consider the following 313-residue polypeptide: 4-diphosphocytidyl-2-C-methyl-D-erythritol kinase (313 aa).

Lys10 is a catalytic residue. 95–105 (PVTAGLGGGSS) contacts ATP. Asp136 is an active-site residue. Residues 289–313 (HPRVSPWRSPRSASSRSTRRSSRPT) form a disordered region. Over residues 292–304 (VSPWRSPRSASSR) the composition is skewed to low complexity.

Belongs to the GHMP kinase family. IspE subfamily.

It carries out the reaction 4-CDP-2-C-methyl-D-erythritol + ATP = 4-CDP-2-C-methyl-D-erythritol 2-phosphate + ADP + H(+). The protein operates within isoprenoid biosynthesis; isopentenyl diphosphate biosynthesis via DXP pathway; isopentenyl diphosphate from 1-deoxy-D-xylulose 5-phosphate: step 3/6. In terms of biological role, catalyzes the phosphorylation of the position 2 hydroxy group of 4-diphosphocytidyl-2C-methyl-D-erythritol. This is 4-diphosphocytidyl-2-C-methyl-D-erythritol kinase from Anaeromyxobacter dehalogenans (strain 2CP-1 / ATCC BAA-258).